A 665-amino-acid polypeptide reads, in one-letter code: Methionine--tRNA ligase (665 aa).

The 'HIGH' region motif lies at 12 to 22 (YYPSGKLHIGS). The 'KMSKS' region motif lies at 308–312 (KMSKS). K311 contacts ATP. In terms of domain architecture, tRNA-binding spans 562 to 665 (TFDAVEIRVA…SSVPNGSIIG (104 aa)).

Belongs to the class-I aminoacyl-tRNA synthetase family. MetG type 2B subfamily. Homodimer.

It is found in the cytoplasm. It catalyses the reaction tRNA(Met) + L-methionine + ATP = L-methionyl-tRNA(Met) + AMP + diphosphate. In terms of biological role, is required not only for elongation of protein synthesis but also for the initiation of all mRNA translation through initiator tRNA(fMet) aminoacylation. In Streptococcus pyogenes serotype M1, this protein is Methionine--tRNA ligase (metG).